Reading from the N-terminus, the 390-residue chain is NADH-dependent butanol dehydrogenase B (390 aa).

This sequence belongs to the iron-containing alcohol dehydrogenase family. Homodimer.

It functions in the pathway alcohol metabolism; butanol biosynthesis. The chain is NADH-dependent butanol dehydrogenase B (bdhB) from Clostridium acetobutylicum (strain ATCC 824 / DSM 792 / JCM 1419 / IAM 19013 / LMG 5710 / NBRC 13948 / NRRL B-527 / VKM B-1787 / 2291 / W).